We begin with the raw amino-acid sequence, 106 residues long: Large ribosomal subunit protein eL42 (106 aa).

The protein belongs to the eukaryotic ribosomal protein eL42 family. In terms of assembly, component of the large ribosomal subunit.

The protein localises to the cytoplasm. Functionally, component of the large ribosomal subunit. The ribosome is a large ribonucleoprotein complex responsible for the synthesis of proteins in the cell. This is Large ribosomal subunit protein eL42 (RPL36A) from Papio anubis (Olive baboon).